Reading from the N-terminus, the 559-residue chain is Non-homologous end joining factor IFFO1 (559 aa).

A disordered region spans residues 21-57; sequence GPLGDSLGGDHFAGGGDLPPAPLSPAGPAAYSPPGPG. Residues 39-57 show a composition bias toward pro residues; sequence PPAPLSPAGPAAYSPPGPG. The segment at 65-116 is LMNA binding; it reads ALRNDLGSNINVLKTLNLRFRCFLAKVHELERRNRLLEKQLQQALEEGKQGR. An IF rod domain is found at 73–526; it reads NINVLKTLNL…RLITQSGDRK (454 aa). A coiled-coil region spans residues 85 to 117; that stretch reads RCFLAKVHELERRNRLLEKQLQQALEEGKQGRR. The segment at 158 to 187 is disordered; sequence SPARSPAGPLAPSAASLSSSSTSTSTTYSS. Residues 237-301 adopt a coiled-coil conformation; it reads EIRALYNVLA…LKVEQLKAEL (65 aa). Residues 360-394 are disordered; sequence SMGGRKRERKAAVEEDTSLSESEGPRQPDGDEEES. The interval 450–525 is XCCR4 binding. Required for localization to the double-strand breaks (DSBs); sequence EQEDSLEKVI…RRLITQSGDR (76 aa). A coiled-coil region spans residues 455 to 501; sequence LEKVIKDTESLFKTREKEYQETIDQIELELATAKNDMNRHLHEYMEM. The tract at residues 520–559 is disordered; it reads TQSGDRKSPAFTAVPLSDPPPPPSEAEDSDRDVSSDSSMR. A compositionally biased stretch (basic and acidic residues) spans 550–559; that stretch reads RDVSSDSSMR.

This sequence belongs to the intermediate filament family. As to quaternary structure, forms a heterotetramer with XRCC4. The interaction with XRCC4 is direct, involves LIG4-free XRCC4 and leads to relocalization of IFFO1 at the double-strand break (DSB) sites. Interacts with LMNA; the interaction forms an interior nucleoskeleton and the recruitment to DNA double-strand breaks. As to expression, ubiquitously expressed.

The protein resides in the nucleus. It is found in the nucleoplasm. The protein localises to the nucleus inner membrane. Its subcellular location is the nucleus matrix. Nuclear matrix protein involved in the immobilization of broken DNA ends and the suppression of chromosome translocation during DNA double-strand breaks (DSBs). Interacts with the nuclear lamina component LMNA, resulting in the formation of a nucleoskeleton that relocalizes to the DSB sites in a XRCC4-dependent manner and promotes the immobilization of the broken ends, thereby preventing chromosome translocation. Acts as a scaffold that allows the DNA repair protein XRCC4 and LMNA to assemble into a complex at the DSB sites. In Homo sapiens (Human), this protein is Non-homologous end joining factor IFFO1.